Here is a 174-residue protein sequence, read N- to C-terminus: Probasin (174 aa).

Residues M1–S18 form the signal peptide. Cysteines 77 and 168 form a disulfide.

This sequence belongs to the calycin superfamily. Lipocalin family.

Its subcellular location is the secreted. The polypeptide is Probasin (Pbsn) (Mus musculus (Mouse)).